The chain runs to 216 residues: MIITIDGPSGTGKSTLAKALAQTLQFLYCNTGAMYRTLAYARLQPDWQEVPLEDFLASPPFSFSFSKDSPLQAFYGDRLLTSELSSQEVANFASLFSKEPLVRAYMQTLQKQYATVGNCVFEGRDMGSKVFPHAEVKIFLTAKPEIRAERRLKDLPQGSLPKEALMAELIARDQADQQRECDPLVIPQDAIVIDSSDLTISQILEKILPLIPSHLT.

Residue 7 to 15 coordinates ATP; it reads GPSGTGKST.

It belongs to the cytidylate kinase family. Type 1 subfamily.

It localises to the cytoplasm. The catalysed reaction is CMP + ATP = CDP + ADP. It carries out the reaction dCMP + ATP = dCDP + ADP. The protein is Cytidylate kinase of Chlamydia trachomatis serovar L2 (strain ATCC VR-902B / DSM 19102 / 434/Bu).